A 220-amino-acid chain; its full sequence is Putative O-methyltransferase Mjls_4009 (220 aa).

S-adenosyl-L-methionine contacts are provided by residues Val47, Glu69, 71–72 (GT), Ser77, Asp95, and Val96. Residue Asp143 coordinates substrate. An S-adenosyl-L-methionine-binding site is contributed by Asp145.

The protein belongs to the class I-like SAM-binding methyltransferase superfamily. Cation-dependent O-methyltransferase family.

In Mycobacterium sp. (strain JLS), this protein is Putative O-methyltransferase Mjls_4009.